Here is a 271-residue protein sequence, read N- to C-terminus: Shikimate dehydrogenase (NADP(+)) (271 aa).

Shikimate-binding positions include 14 to 16 (SLS) and Thr61. Catalysis depends on Lys65, which acts as the Proton acceptor. Residues Asn86 and Asp101 each coordinate shikimate. NADP(+) contacts are provided by residues 125-129 (GAGGA) and Ile212. Position 214 (Tyr214) interacts with shikimate. Gly235 is an NADP(+) binding site.

The protein belongs to the shikimate dehydrogenase family. Homodimer.

The catalysed reaction is shikimate + NADP(+) = 3-dehydroshikimate + NADPH + H(+). Its pathway is metabolic intermediate biosynthesis; chorismate biosynthesis; chorismate from D-erythrose 4-phosphate and phosphoenolpyruvate: step 4/7. Involved in the biosynthesis of the chorismate, which leads to the biosynthesis of aromatic amino acids. Catalyzes the reversible NADPH linked reduction of 3-dehydroshikimate (DHSA) to yield shikimate (SA). The chain is Shikimate dehydrogenase (NADP(+)) from Clostridium perfringens (strain ATCC 13124 / DSM 756 / JCM 1290 / NCIMB 6125 / NCTC 8237 / Type A).